The sequence spans 286 residues: Glucose import system permease protein GlcT (286 aa).

Helical transmembrane passes span 6–26 (TIIL…LVIW), 71–91 (VILV…LYFL), 103–123 (IVIY…LWLF), 154–174 (LVLV…LAGF), 199–219 (ILIP…FLFS), and 260–280 (VATM…LTVI). Positions 63–275 (LLHSIELSVI…LIATIIIIPY (213 aa)) constitute an ABC transmembrane type-1 domain.

The protein belongs to the binding-protein-dependent transport system permease family. As to quaternary structure, the complex is composed of two ATP-binding proteins (GlcV), two transmembrane proteins (GlcT and GlcU) and a solute-binding protein (GlcS).

The protein localises to the cell membrane. Functionally, part of the ABC transporter complex GlcSTUV involved in glucose uptake. Responsible for the translocation of the substrate across the membrane. The sequence is that of Glucose import system permease protein GlcT from Saccharolobus solfataricus (strain ATCC 35092 / DSM 1617 / JCM 11322 / P2) (Sulfolobus solfataricus).